The sequence spans 387 residues: MKDIVIVDCIRTPMGRSKNGVFRHTRAEDLSAALMKGLLERNPEVDPEELEDIYWGCVQQTLEQGFNIARNSALIAGIPHKVAGVTVNRLCGSSMQALHDATRAIMNGDGDIFMAGGVEHMGHVPMTHGIDFHPGMNKSVAKASGSMGMTAELLSRKFGITREQQDEFGARSHRKAHEATVEGRFAKEIYAMNGHNADGELVRVTEDEVIRPETTAEGLSQLRPVFDPANGTVTAGTSSALSDGAAAMLVMSADKAKELGLTPRVKIRSMAVAGCDPSIMGYGPVPATEKALKRAGVSIDDIDVVELNEAFAAQSLPVLKGLKLFDKMEEKVNLNGGAIALGHPLGCSGARISTTLINLMEEKDAKLGLATMCIGLGQGIATVFERV.

Cys-91 (acyl-thioester intermediate) is an active-site residue. Residues His-343 and Cys-373 each act as proton acceptor in the active site.

Belongs to the thiolase-like superfamily. Thiolase family. Heterotetramer of two alpha chains (FadB) and two beta chains (FadA).

It is found in the cytoplasm. The catalysed reaction is an acyl-CoA + acetyl-CoA = a 3-oxoacyl-CoA + CoA. Its pathway is lipid metabolism; fatty acid beta-oxidation. Catalyzes the final step of fatty acid oxidation in which acetyl-CoA is released and the CoA ester of a fatty acid two carbons shorter is formed. The protein is 3-ketoacyl-CoA thiolase of Idiomarina loihiensis (strain ATCC BAA-735 / DSM 15497 / L2-TR).